A 331-amino-acid polypeptide reads, in one-letter code: Mitochondrial glycine transporter (331 aa).

Solcar repeat units lie at residues 19 to 103 (SRTT…LRQG), 132 to 216 (LSNW…LKRR), and 234 to 318 (SSSS…LILR). The next 6 membrane-spanning stretches (helical) occupy residues 25-50 (FAAGLCSGLTSSILLQPADLLKTRVQ), 78-104 (GTLPSALRTGFGSALYFTSLNALRQGL), 138-163 (LATGAVARTAAGFVMMPVTVLKVRYE), 191-214 (GFGATAARDAPYAGLYVLFYEQLK), 238-264 (INFVSGGLAAGLATAITNPFDAVKTRL), and 293-311 (GLGLRITRKALSSALAWTV).

It belongs to the mitochondrial carrier (TC 2.A.29) family. SLC25A38 subfamily.

It is found in the mitochondrion inner membrane. It carries out the reaction glycine(in) = glycine(out). In terms of biological role, mitochondrial glycine transporter that imports glycine into the mitochondrial matrix. Plays an important role in providing glycine for the first enzymatic step in heme biosynthesis, the condensation of glycine with succinyl-CoA to produce 5-aminolevulinate (ALA) in the mitochondrial matrix. This is Mitochondrial glycine transporter from Neosartorya fischeri (strain ATCC 1020 / DSM 3700 / CBS 544.65 / FGSC A1164 / JCM 1740 / NRRL 181 / WB 181) (Aspergillus fischerianus).